The following is a 716-amino-acid chain: MPLPEPSEQEGESVKAGQEPSPKPGTDVIPAAPRKPREFSKLVLLTASDQDEDGVGSKPQEVHCVLSLEMAGPATLASTLQILPVEEQGGVVQPALEMPEQKCSKLDAAAPQSLEFLRTPFGGRLLVLESFLYKQEKAVGDKVYWKCRQHAELGCRGRAITRGLRATVMRGHCHAPDEQGLEARRQREKLPSLALPEGLGEPQGPEGPGGRVEEPLEGVGPWQCPEEPEPTPGLVLSKPALEEEEAPRALSLLSLPPKKRSILGLGQARPLEFLRTCYGGSFLVHESFLYKREKAVGDKVYWTCRDHALHGCRSRAITQGQRVTVMRGHCHQPDMEGLEARRQQEKAVETLQAGQDGPGSQVDTLLRGVDSLLYRRGPGPLTLTRPRPRKRAKVEDQELPTQPEAPDEHQDMDADPGGPEFLKTPLGGSFLVYESFLYRREKAAGEKVYWTCRDQARMGCRSRAITQGRRVTVMRGHCHPPDLGGLEALRQREKRPNTAQRGSPGGPEFLKTPLGGSFLVYESFLYRREKAAGEKVYWTCRDQARMGCRSRAITQGRRVMVMRRHCHPPDLGGLEALRQREHFPNLAQWDSPDPLRPLEFLRTSLGGRFLVHESFLYRKEKAAGEKVYWMCRDQARLGCRSRAITQGHRIMVMRSHCHQPDLAGLEALRQRERLPTTAQQEDPEKIQVQLCFKTCSPESQQIYGDIKDVRLDGESQ.

The disordered stretch occupies residues 1 to 35 (MPLPEPSEQEGESVKAGQEPSPKPGTDVIPAAPRK). A Phosphoserine modification is found at S21. An FLYWCH-type 1 zinc finger spans residues 116–174 (FLRTPFGGRLLVLESFLYKQEKAVGDKVYWKCRQHAELGCRGRAITRGLRATVMRGHCH). A Glycyl lysine isopeptide (Lys-Gly) (interchain with G-Cter in SUMO2) cross-link involves residue K134. The segment at 191–231 (PSLALPEGLGEPQGPEGPGGRVEEPLEGVGPWQCPEEPEPT) is disordered. Over residues 195 to 204 (LPEGLGEPQG) the composition is skewed to low complexity. Phosphoserine is present on S261. The segment at 273-331 (FLRTCYGGSFLVHESFLYKREKAVGDKVYWTCRDHALHGCRSRAITQGQRVTVMRGHCH) adopts an FLYWCH-type 2 zinc-finger fold. Position 371 is a phosphoserine (S371). A disordered region spans residues 377–421 (GPGPLTLTRPRPRKRAKVEDQELPTQPEAPDEHQDMDADPGGPEF). K393 participates in a covalent cross-link: Glycyl lysine isopeptide (Lys-Gly) (interchain with G-Cter in SUMO2). An FLYWCH-type 3 zinc finger spans residues 421–479 (FLKTPLGGSFLVYESFLYRREKAAGEKVYWTCRDQARMGCRSRAITQGRRVTVMRGHCH). At S503 the chain carries Phosphoserine. The FLYWCH-type 4 zinc-finger motif lies at 509–567 (FLKTPLGGSFLVYESFLYRREKAAGEKVYWTCRDQARMGCRSRAITQGRRVMVMRRHCH). Position 591 is a phosphoserine (S591). The FLYWCH-type 5 zinc-finger motif lies at 600 to 658 (FLRTSLGGRFLVHESFLYRKEKAAGEKVYWMCRDQARLGCRSRAITQGHRIMVMRSHCH). Residue K685 forms a Glycyl lysine isopeptide (Lys-Gly) (interchain with G-Cter in SUMO2) linkage. S696 is modified (phosphoserine).

As to quaternary structure, interacts with CTNNB1 (when unphosphorylated), perhaps preventing interaction of CTNNB1 with TCF4, and thereby regulating transcription activation; phosphorylation of CTNNB1 may inhibit the interaction.

Its subcellular location is the nucleus. The protein resides in the chromosome. The protein localises to the centromere. Functionally, transcription cofactor. Negatively regulates transcription activation by catenin beta-1 CTNNB1, perhaps acting by competing with TCF4 for CTNNB1 binding. May play a role in DNA-damage response signaling. Binds specifically to DNA sequences at peri-centromeric chromatin loci. The sequence is that of FLYWCH-type zinc finger-containing protein 1 (FLYWCH1) from Homo sapiens (Human).